Consider the following 292-residue polypeptide: Putative ribonuclease 3 (292 aa).

Residues 32-158 (LGMSDEYIPY…FFGATEWLID (127 aa)) form the RNase III domain. The DRBM domain maps to 204–276 (DAKTRFNEVI…ASRALETLAL (73 aa)).

Belongs to the IIV-6 142R family.

It catalyses the reaction Endonucleolytic cleavage to 5'-phosphomonoester.. Digests double-stranded RNA. In Acheta domesticus (House cricket), this protein is Putative ribonuclease 3.